Consider the following 73-residue polypeptide: U-scoloptoxin(15)-Sa1a (73 aa).

The N-terminal stretch at 1-20 (MKFHIIFCLLAALMMTSAFA) is a signal peptide.

Belongs to the scoloptoxin-15 family. Post-translationally, contains 2 disulfide bonds. In terms of tissue distribution, expressed by the venom gland.

The protein resides in the secreted. The polypeptide is U-scoloptoxin(15)-Sa1a (Scolopendra alternans (Florida Keys giant centipede)).